Consider the following 701-residue polypeptide: UvrABC system protein B (701 aa).

Residues 28–188 (RRIRAGERDV…VDVQYTRNDL (161 aa)) form the Helicase ATP-binding domain. An ATP-binding site is contributed by 41-48 (GATGTGKS). The Beta-hairpin signature appears at 94-117 (YYDYYQPEAYIAQTDTYIEKDSSI). Residues 432–598 (QIDDLIGEIR…PLRKKIADIL (167 aa)) enclose the Helicase C-terminal domain. The interval 606-636 (DDTEAAESVPIGGSGRNSSRGRRAQGEPGRA) is disordered. The region spanning 656–691 (ADLIKDLTSQMMVAARDLQFELAARFRDEIADLKKE) is the UVR domain.

Belongs to the UvrB family. Forms a heterotetramer with UvrA during the search for lesions. Interacts with UvrC in an incision complex.

The protein resides in the cytoplasm. Functionally, the UvrABC repair system catalyzes the recognition and processing of DNA lesions. A damage recognition complex composed of 2 UvrA and 2 UvrB subunits scans DNA for abnormalities. Upon binding of the UvrA(2)B(2) complex to a putative damaged site, the DNA wraps around one UvrB monomer. DNA wrap is dependent on ATP binding by UvrB and probably causes local melting of the DNA helix, facilitating insertion of UvrB beta-hairpin between the DNA strands. Then UvrB probes one DNA strand for the presence of a lesion. If a lesion is found the UvrA subunits dissociate and the UvrB-DNA preincision complex is formed. This complex is subsequently bound by UvrC and the second UvrB is released. If no lesion is found, the DNA wraps around the other UvrB subunit that will check the other stand for damage. This Mycobacterium ulcerans (strain Agy99) protein is UvrABC system protein B.